The chain runs to 423 residues: Gamma-glutamyl phosphate reductase (423 aa).

It belongs to the gamma-glutamyl phosphate reductase family.

The protein resides in the cytoplasm. It catalyses the reaction L-glutamate 5-semialdehyde + phosphate + NADP(+) = L-glutamyl 5-phosphate + NADPH + H(+). It functions in the pathway amino-acid biosynthesis; L-proline biosynthesis; L-glutamate 5-semialdehyde from L-glutamate: step 2/2. Catalyzes the NADPH-dependent reduction of L-glutamate 5-phosphate into L-glutamate 5-semialdehyde and phosphate. The product spontaneously undergoes cyclization to form 1-pyrroline-5-carboxylate. This chain is Gamma-glutamyl phosphate reductase, found in Desulfovibrio desulfuricans (strain ATCC 27774 / DSM 6949 / MB).